Reading from the N-terminus, the 424-residue chain is MLDIKRIRTDFEAVAEKLATRGVDAAVLNEMKEIDAKRRNILVKVETLKAERNTVSAEIAQAKRNKENTDDKIAAMQNLSAEVKALDAELAEIDAKLTEFTTTLPNIPADSVPVGTDEDDNVEVRRWGTPREFDFEPKAHWDLGEDLGILDWERGGKVTGARFLFYKGLGARLERAIYNFMLDEHGKEGYTEVITPYIVNHDSMFGTGQYPKFKEDTFELSDTNFVLIPTAEVPLTNYYRDEILDGKDLPIYFTAMSPSFRSEAGSAGRDTRGLIRLHQFHKVEMVKFAKPEESYEELEKMTANAENILQKLNLPYRVVALSTGDMGFSTAKTYDLEVWIPAQNNYREISSCSNTEDFQARRAQIRYRDEADGKVKLLHTLNGSGLAVGRTVAAILENYQNEDGSVTIPEALRPYMGGAEVIKP.

230 to 232 provides a ligand contact to L-serine; sequence TAE. ATP is bound at residue 261–263; it reads RSE. Residue Glu284 coordinates L-serine. Residue 348–351 participates in ATP binding; that stretch reads EISS. L-serine is bound at residue Ser384.

It belongs to the class-II aminoacyl-tRNA synthetase family. Type-1 seryl-tRNA synthetase subfamily. As to quaternary structure, homodimer. The tRNA molecule binds across the dimer.

The protein resides in the cytoplasm. The enzyme catalyses tRNA(Ser) + L-serine + ATP = L-seryl-tRNA(Ser) + AMP + diphosphate + H(+). It catalyses the reaction tRNA(Sec) + L-serine + ATP = L-seryl-tRNA(Sec) + AMP + diphosphate + H(+). Its pathway is aminoacyl-tRNA biosynthesis; selenocysteinyl-tRNA(Sec) biosynthesis; L-seryl-tRNA(Sec) from L-serine and tRNA(Sec): step 1/1. Functionally, catalyzes the attachment of serine to tRNA(Ser). Is also able to aminoacylate tRNA(Sec) with serine, to form the misacylated tRNA L-seryl-tRNA(Sec), which will be further converted into selenocysteinyl-tRNA(Sec). The sequence is that of Serine--tRNA ligase from Streptococcus pneumoniae (strain JJA).